The sequence spans 593 residues: MAFRRAEGTSMIQALAMTVAEIPVFLYTTFGQSAFSQLRLTPGLRKVLFATALGTVALALAAHQLKRRRRRKKQVGPEMGGEQLGTVPLPILLARKVPSVKKGYSSRRVQSPSSKSNDTLSGISSIEPSKHSGSSHSVASMMAVNSSSPTAACSGLWDARGMEESLTTSDGNAESLYMQGMELFEEALQKWEQALSVGQRGDSGSTPMPRDGLRNPETASEPLSEPESQRKEFAEKLESLLHRAYHLQEEFGSTFPADSMLLDLERTLMLPLTEGSLRLRADDEDSLTSEDSFFSATELFESLQTGDYPIPLSRPAAAYEEALQLVKEGRVPCRTLRTELLGCYSDQDFLAKLHCVRQAFEGLLEDKSNQLFFGKVGRQMVTGLMTKAEKSPKGFLESYEEMLSYALRPETWATTRLELEGRGVVCMSFFDIVLDFILMDAFEDLENPPASVLAVLRNRWLSDSFKETALATACWSVLKAKRRLLMVPDGFISHFYSVSEHVSPVLAFGFLGPKPQLAEVCAFFKHQIVQYLRDMFDLDNVRYTSLPALADDILQLSRRRSEILLGYLGVPAASSAGVNGALPRENGPLGELQ.

2 consecutive transmembrane segments (helical) span residues 11–31 and 42–62; these read MIQALAMTVAEIPVFLYTTFG and PGLRKVLFATALGTVALALAA. 2 disordered regions span residues 103–141 and 196–231; these read GYSSRRVQSPSSKSNDTLSGISSIEPSKHSGSSHSVASM and SVGQRGDSGSTPMPRDGLRNPETASEPLSEPESQRK. Low complexity-rich tracts occupy residues 106–116 and 123–141; these read SRRVQSPSSKS and ISSIEPSKHSGSSHSVASM. Residue Ser-132 is modified to Phosphoserine. The residue at position 206 (Thr-206) is a Phosphothreonine. Phosphoserine is present on residues Ser-220, Ser-224, and Ser-228. Thr-273 is subject to Phosphothreonine. A phosphoserine mark is found at Ser-276 and Ser-295. The short motif at 292-298 is the FFAT element; sequence SFFSATE.

It belongs to the mitoguardin family. As to quaternary structure, homodimer and heterodimer; forms heterodimers with MIGA1. Interacts with PLD6/MitoPLD. Interacts (via phosphorylated FFAT motif) with MOSPD2, VAPA and VAPB. Post-translationally, phosphorylation at Ser-295 of the FFAT motif activates interaction with MOSPD2, VAPA and VAPB.

It is found in the mitochondrion outer membrane. Functionally, regulator of mitochondrial fusion: acts by forming homo- and heterodimers at the mitochondrial outer membrane and facilitating the formation of PLD6/MitoPLD dimers. May act by regulating phospholipid metabolism via PLD6/MitoPLD. The sequence is that of Mitoguardin 2 from Homo sapiens (Human).